A 421-amino-acid polypeptide reads, in one-letter code: D-inositol 3-phosphate glycosyltransferase (421 aa).

His9 contacts 1D-myo-inositol 3-phosphate. Residues 15-16 (QP) and Gly23 contribute to the UDP-N-acetyl-alpha-D-glucosamine site. Residues 20-25 (DAGGMN), Lys78, Tyr110, Thr134, and Arg154 contribute to the 1D-myo-inositol 3-phosphate site. UDP-N-acetyl-alpha-D-glucosamine contacts are provided by Arg231, Lys236, and Arg294. Mg(2+) is bound by residues Tyr303, Gln304, and Ala306. The UDP-N-acetyl-alpha-D-glucosamine site is built by Glu316 and Glu324. Mg(2+) is bound at residue Thr330.

It belongs to the glycosyltransferase group 1 family. MshA subfamily. In terms of assembly, homodimer.

The enzyme catalyses 1D-myo-inositol 3-phosphate + UDP-N-acetyl-alpha-D-glucosamine = 1D-myo-inositol 2-acetamido-2-deoxy-alpha-D-glucopyranoside 3-phosphate + UDP + H(+). In terms of biological role, catalyzes the transfer of a N-acetyl-glucosamine moiety to 1D-myo-inositol 3-phosphate to produce 1D-myo-inositol 2-acetamido-2-deoxy-glucopyranoside 3-phosphate in the mycothiol biosynthesis pathway. The polypeptide is D-inositol 3-phosphate glycosyltransferase (Corynebacterium aurimucosum (strain ATCC 700975 / DSM 44827 / CIP 107346 / CN-1) (Corynebacterium nigricans)).